The chain runs to 652 residues: DNA ligase (652 aa).

Residues 29 to 33 (DSEYD), 78 to 79 (SL), and glutamate 107 each bind NAD(+). The active-site N6-AMP-lysine intermediate is lysine 109. NAD(+)-binding residues include arginine 130, glutamate 164, lysine 278, and lysine 302. Cysteine 395, cysteine 398, cysteine 413, and cysteine 418 together coordinate Zn(2+). The region spanning 577–652 (VADAALSGLT…VRDEAWLESL (76 aa)) is the BRCT domain.

It belongs to the NAD-dependent DNA ligase family. LigA subfamily. It depends on Mg(2+) as a cofactor. Mn(2+) serves as cofactor.

It carries out the reaction NAD(+) + (deoxyribonucleotide)n-3'-hydroxyl + 5'-phospho-(deoxyribonucleotide)m = (deoxyribonucleotide)n+m + AMP + beta-nicotinamide D-nucleotide.. DNA ligase that catalyzes the formation of phosphodiester linkages between 5'-phosphoryl and 3'-hydroxyl groups in double-stranded DNA using NAD as a coenzyme and as the energy source for the reaction. It is essential for DNA replication and repair of damaged DNA. The chain is DNA ligase from Streptococcus pneumoniae (strain 70585).